The following is a 470-amino-acid chain: tRNA-2-methylthio-N(6)-dimethylallyladenosine synthase (470 aa).

Positions 1-116 (MTYTVRTYGC…LPALLRRSRH (116 aa)) constitute an MTTase N-terminal domain. 6 residues coordinate [4Fe-4S] cluster: Cys-10, Cys-45, Cys-79, Cys-153, Cys-157, and Cys-160. Residues 139 to 369 (RESNYSAWVS…LDLQNRIALE (231 aa)) enclose the Radical SAM core domain. One can recognise a TRAM domain in the interval 372-439 (RKLIGKEVEL…PYHLIGDNAL (68 aa)).

It belongs to the methylthiotransferase family. MiaB subfamily. In terms of assembly, monomer. It depends on [4Fe-4S] cluster as a cofactor.

It is found in the cytoplasm. The catalysed reaction is N(6)-dimethylallyladenosine(37) in tRNA + (sulfur carrier)-SH + AH2 + 2 S-adenosyl-L-methionine = 2-methylsulfanyl-N(6)-dimethylallyladenosine(37) in tRNA + (sulfur carrier)-H + 5'-deoxyadenosine + L-methionine + A + S-adenosyl-L-homocysteine + 2 H(+). In terms of biological role, catalyzes the methylthiolation of N6-(dimethylallyl)adenosine (i(6)A), leading to the formation of 2-methylthio-N6-(dimethylallyl)adenosine (ms(2)i(6)A) at position 37 in tRNAs that read codons beginning with uridine. The sequence is that of tRNA-2-methylthio-N(6)-dimethylallyladenosine synthase from Tropheryma whipplei (strain Twist) (Whipple's bacillus).